Consider the following 133-residue polypeptide: MAKAPNTAAQRVRKKVRKNVSDGVAHVHASFNNTIITITDRQGNALAWASSGGQGFKGSRKSTPFAAQVAAEVAGRAAQDQGIKNLEVEIKGPGPGRESSVRALAALGIRIVSISDVTPVPHNGCRPQKRRRI.

Belongs to the universal ribosomal protein uS11 family. Part of the 30S ribosomal subunit. Interacts with proteins S7 and S18. Binds to IF-3.

Functionally, located on the platform of the 30S subunit, it bridges several disparate RNA helices of the 16S rRNA. Forms part of the Shine-Dalgarno cleft in the 70S ribosome. The sequence is that of Small ribosomal subunit protein uS11 from Methylibium petroleiphilum (strain ATCC BAA-1232 / LMG 22953 / PM1).